Consider the following 831-residue polypeptide: Zinc phosphodiesterase ELAC protein 2 (831 aa).

The transit peptide at 1–16 directs the protein to the mitochondrion; it reads MWALRSLLRPLGLRTM. 2 disordered regions span residues 15–47 and 179–227; these read TMSQ…PGGP and SERR…ANRK. Residues 186–212 are compositionally biased toward polar residues; it reads QQPSQSPRTSPNRLSPKQSSDSGSAEN. Serine 191, serine 195, serine 200, serine 204, and serine 732 each carry phosphoserine. Residues 791–831 are disordered; that stretch reads LTQQADSPEDREPQQKRAHTDEPHSPQSKKESVANTLGARV. The residue at position 792 (threonine 792) is a Phosphothreonine. Phosphoserine is present on residues serine 797 and serine 815. Positions 798 to 822 are enriched in basic and acidic residues; the sequence is PEDREPQQKRAHTDEPHSPQSKKES.

This sequence belongs to the RNase Z family. As to quaternary structure, homodimer. Interacts with PTCD1. It depends on Zn(2+) as a cofactor.

It localises to the mitochondrion. The protein resides in the mitochondrion matrix. It is found in the mitochondrion nucleoid. The protein localises to the nucleus. The catalysed reaction is Endonucleolytic cleavage of RNA, removing extra 3' nucleotides from tRNA precursor, generating 3' termini of tRNAs. A 3'-hydroxy group is left at the tRNA terminus and a 5'-phosphoryl group is left at the trailer molecule.. In terms of biological role, zinc phosphodiesterase, which displays mitochondrial tRNA 3'-processing endonuclease activity. Involved in tRNA maturation, by removing a 3'-trailer from precursor tRNA. Associates with mitochondrial DNA complexes at the nucleoids to initiate RNA processing and ribosome assembly. In Mus musculus (Mouse), this protein is Zinc phosphodiesterase ELAC protein 2 (Elac2).